A 189-amino-acid chain; its full sequence is Chitin synthase 1 (189 aa).

The protein belongs to the chitin synthase family.

The protein localises to the cell membrane. The catalysed reaction is [(1-&gt;4)-N-acetyl-beta-D-glucosaminyl](n) + UDP-N-acetyl-alpha-D-glucosamine = [(1-&gt;4)-N-acetyl-beta-D-glucosaminyl](n+1) + UDP + H(+). Its function is as follows. Polymerizes chitin, a structural polymer of the cell wall and septum, by transferring the sugar moiety of UDP-GlcNAc to the non-reducing end of the growing chitin polymer. This is Chitin synthase 1 (CHS1) from Exophiala exophialae (Black yeast-like fungus).